Reading from the N-terminus, the 2346-residue chain is Acetyl-CoA carboxylase 1 (2346 aa).

Residue Met-1 is modified to N-acetylmethionine. Ser-5, Ser-23, Ser-25, Ser-29, Ser-34, Ser-48, Ser-50, and Ser-53 each carry phosphoserine. Thr-58 bears the Phosphothreonine mark. Phosphoserine is present on Ser-78. Residue Ser-80 is modified to Phosphoserine; by AMPK. The Biotin carboxylation domain maps to 117–618; it reads VIEKVLIANN…GTGWLDRLIA (502 aa). One can recognise an ATP-grasp domain in the interval 275–466; the sequence is SKRILNVPQE…LPAAQLQIAM (192 aa). 315–320 contacts ATP; the sequence is GGGGKG. Mg(2+) is bound by residues Glu-424, Glu-437, and Asn-439. Residues Glu-424, Glu-437, and Asn-439 each coordinate Mn(2+). Residue Arg-441 is part of the active site. Position 610 is a phosphothreonine (Thr-610). The region spanning 745-819 is the Biotinyl-binding domain; it reads FEKENDPSVL…DPGCVIAKMQ (75 aa). An N6-biotinyllysine modification is found at Lys-786. Phosphoserine is present on residues Ser-835, Ser-1201, Ser-1216, and Ser-1218. Thr-1227 carries the phosphothreonine modification. Phosphoserine occurs at positions 1259, 1263, and 1273. Residue Lys-1334 is modified to N6-acetyllysine. In terms of domain architecture, CoA carboxyltransferase N-terminal spans 1576–1914; sequence PYVTKDQLQS…SVYSSVPLLN (339 aa). The segment at 1576-2234 is carboxyltransferase; it reads PYVTKDQLQS…EDLVKKKIHN (659 aa). 3 residues coordinate CoA: Arg-1823, Lys-2127, and Arg-2129. The region spanning 1918–2234 is the CoA carboxyltransferase C-terminal domain; that stretch reads PIDRVIEFVP…EDLVKKKIHN (317 aa). A Phosphothreonine modification is found at Thr-2153.

As to quaternary structure, monomer, homodimer, and homotetramer. Can form filamentous polymers. Interacts in its inactive phosphorylated form with the BRCT domains of BRCA1 which prevents ACACA dephosphorylation and inhibits lipid synthesis. Interacts with MID1IP1; interaction with MID1IP1 promotes oligomerization and increases its activity. Requires Mg(2+) as cofactor. It depends on Mn(2+) as a cofactor. Biotin serves as cofactor. Phosphorylation on Ser-1263 is required for interaction with BRCA1. Post-translationally, phosphorylation at Ser-80 by AMPK inactivates enzyme activity. In terms of processing, the biotin cofactor is covalently attached to the central biotinyl-binding domain and is required for the catalytic activity.

It is found in the cytoplasm. It localises to the cytosol. The enzyme catalyses hydrogencarbonate + acetyl-CoA + ATP = malonyl-CoA + ADP + phosphate + H(+). It participates in lipid metabolism; malonyl-CoA biosynthesis; malonyl-CoA from acetyl-CoA: step 1/1. Its activity is regulated as follows. Inhibited by phosphorylation. Citrate promotes oligomerization of the protein into filaments that correspond to the most active form of the carboxylase. Cytosolic enzyme that catalyzes the carboxylation of acetyl-CoA to malonyl-CoA, the first and rate-limiting step of de novo fatty acid biosynthesis. This is a 2 steps reaction starting with the ATP-dependent carboxylation of the biotin carried by the biotin carboxyl carrier (BCC) domain followed by the transfer of the carboxyl group from carboxylated biotin to acetyl-CoA. This is Acetyl-CoA carboxylase 1 from Bos taurus (Bovine).